We begin with the raw amino-acid sequence, 334 residues long: Malate dehydrogenase, cytoplasmic (334 aa).

At Ser-2 the chain carries N-acetylserine. NAD(+)-binding positions include Gly-11 to Ala-17 and Asp-42. The substrate site is built by Arg-92 and Arg-98. Position 105 (Asn-105) interacts with NAD(+). N6-succinyllysine is present on Lys-110. Residue Gln-112 coordinates NAD(+). Lys-118 and Lys-121 each carry N6-acetyllysine. Val-129–Asn-131 contacts NAD(+). 2 residues coordinate substrate: Asn-131 and Arg-162. His-187 serves as the catalytic Proton acceptor. Lys-214 is modified (N6-succinyllysine). Ser-217 is subject to Phosphoserine. Position 230 is an omega-N-methylarginine (Arg-230). Ser-241 carries the phosphoserine modification. Position 298 is an N6-acetyllysine; alternate (Lys-298). Residue Lys-298 is modified to N6-succinyllysine; alternate. Position 309 is a phosphoserine (Ser-309). N6-succinyllysine is present on Lys-318. Ser-332 and Ser-333 each carry phosphoserine.

The protein belongs to the LDH/MDH superfamily. MDH type 2 family. Homodimer. ISGylated. Post-translationally, acetylation at Lys-118 dramatically enhances enzymatic activity and promotes adipogenic differentiation.

It is found in the cytoplasm. It localises to the cytosol. The enzyme catalyses (S)-malate + NAD(+) = oxaloacetate + NADH + H(+). It catalyses the reaction (2R)-2-hydroxy-3-(4-hydroxyphenyl)propanoate + NAD(+) = 3-(4-hydroxyphenyl)pyruvate + NADH + H(+). It carries out the reaction (S)-2-hydroxyglutarate + NAD(+) = 2-oxoglutarate + NADH + H(+). In terms of biological role, catalyzes the reduction of aromatic alpha-keto acids in the presence of NADH. Plays essential roles in the malate-aspartate shuttle and the tricarboxylic acid cycle, important in mitochondrial NADH supply for oxidative phosphorylation. Catalyzes the reduction of 2-oxoglutarate to 2-hydroxyglutarate, leading to elevated reactive oxygen species (ROS). This is Malate dehydrogenase, cytoplasmic from Homo sapiens (Human).